Here is a 220-residue protein sequence, read N- to C-terminus: FMN-dependent NADH:quinone oxidoreductase (220 aa).

FMN is bound by residues Ser10, 17-19, and 136-139; these read SAS and SRGG. A disordered region spans residues 200 to 220; that stretch reads HSEAVTKAKELTERLTADNGR.

Belongs to the azoreductase type 1 family. As to quaternary structure, homodimer. It depends on FMN as a cofactor.

The enzyme catalyses 2 a quinone + NADH + H(+) = 2 a 1,4-benzosemiquinone + NAD(+). It carries out the reaction N,N-dimethyl-1,4-phenylenediamine + anthranilate + 2 NAD(+) = 2-(4-dimethylaminophenyl)diazenylbenzoate + 2 NADH + 2 H(+). In terms of biological role, quinone reductase that provides resistance to thiol-specific stress caused by electrophilic quinones. Functionally, also exhibits azoreductase activity. Catalyzes the reductive cleavage of the azo bond in aromatic azo compounds to the corresponding amines. This Streptomyces coelicolor (strain ATCC BAA-471 / A3(2) / M145) protein is FMN-dependent NADH:quinone oxidoreductase.